Here is an 869-residue protein sequence, read N- to C-terminus: Rho GTPase-activating protein 27 (869 aa).

An SH3 domain is found at 6–69 (EGDVYVLVEH…PAQYVRELPA (64 aa)). The segment at 104 to 137 (GADGSSAEPRGRASSLCGPARQRTSGQRNSLAPG) is disordered. 3 positions are modified to phosphoserine: Ser-155, Ser-215, and Ser-249. WW domains follow at residues 246 to 280 (PRLS…SPFE) and 299 to 333 (ESLE…DETE). Disordered stretches follow at residues 275–299 (WESP…GSGE), 331–389 (ETEE…DLGP), and 447–474 (VPVP…PEEK). Acidic residues predominate over residues 331–343 (ETEELEDDPEEQL). Over residues 345–356 (MQPSLSPRSPGQ) the composition is skewed to polar residues. Residue Ser-350 is modified to Phosphoserine. The region spanning 414-447 (QFTQEQWVRLEDQEGKPYFYNPEDSSVQWELPQV) is the WW 3 domain. A phosphoserine mark is found at Ser-459 and Ser-462. Phosphothreonine is present on Thr-464. A Phosphoserine modification is found at Ser-469. Residues 477-593 (TLDKAGVLHR…WHKAIAEGIE (117 aa)) form the PH domain. The disordered stretch occupies residues 598–644 (DLPQREEGEPSSADFGSSERLGSWKEEDVRPNAASPSLNPGSQESDL). A compositionally biased stretch (polar residues) spans 631-642 (ASPSLNPGSQES). Residue Ser-632 is modified to Phosphoserine. The 190-residue stretch at 677 to 866 (CALAQLCERE…LILHQCADIF (190 aa)) folds into the Rho-GAP domain.

Interacts with SH3KBP1/CIN85.

The protein localises to the cytoplasm. The protein resides in the membrane. Its function is as follows. Rho GTPase-activating protein which may be involved in clathrin-mediated endocytosis. GTPase activators for the Rho-type GTPases act by converting them to an inactive GDP-bound state. Has activity toward CDC42 and RAC1. This is Rho GTPase-activating protein 27 (Arhgap27) from Rattus norvegicus (Rat).